We begin with the raw amino-acid sequence, 142 residues long: Hemoglobin subunit alpha (142 aa).

Residues 2 to 142 (VLSPADKSNV…VSTVLTSKYR (141 aa)) form the Globin domain. Position 4 is a phosphoserine (S4). N6-succinyllysine occurs at positions 8 and 12. N6-acetyllysine; alternate is present on K17. The residue at position 17 (K17) is an N6-succinyllysine; alternate. Y25 bears the Phosphotyrosine mark. S36 carries the phosphoserine modification. Position 41 is an N6-succinyllysine (K41). A Phosphoserine modification is found at S50. Residue H59 coordinates O2. H88 is a heme b binding site. Residue S103 is modified to Phosphoserine. T109 is modified (phosphothreonine). Phosphoserine occurs at positions 125 and 132. 2 positions are modified to phosphothreonine: T135 and T138. S139 bears the Phosphoserine mark.

Belongs to the globin family. In terms of assembly, heterotetramer of two alpha chains and two beta chains. In terms of tissue distribution, red blood cells.

In terms of biological role, involved in oxygen transport from the lung to the various peripheral tissues. Functionally, hemopressin acts as an antagonist peptide of the cannabinoid receptor CNR1. Hemopressin-binding efficiently blocks cannabinoid receptor CNR1 and subsequent signaling. In Ateles geoffroyi (Black-handed spider monkey), this protein is Hemoglobin subunit alpha (HBA).